Consider the following 337-residue polypeptide: Perakine reductase (337 aa).

Tyr-57 (proton donor) is an active-site residue. His-126 serves as a coordination point for substrate. Residue 205–214 (SPIGRGLFAG) participates in NADP(+) binding.

It belongs to the aldo/keto reductase family.

It catalyses the reaction raucaffrinoline + NADP(+) = perakine + NADPH + H(+). Aldo-keto reductase involved in the biosynthesis of monoterpenoid indole alkaloids. Broad substrate specificity enzyme with a high selectivity in the group of alkaloids. Can use perakine, 19(S),20(R)-dihydro-peraksine-17,21-al, cinnamic aldehyde, p-coumaric aldehyde and 3-(3,4,5-trimethoxyphenyl)propanal as substrates, but not ketosteroids such as progesterone. NADPH could not be replaced by NADH. This chain is Perakine reductase (PR), found in Rauvolfia serpentina (Serpentine wood).